A 327-amino-acid chain; its full sequence is Olfactory receptor 9G4 (327 aa).

At 1–43 (MIFPSHDSQAFTSVDMEVGNCTILTEFILLGFSADSQWQPILF) the chain is on the extracellular side. N-linked (GlcNAc...) asparagine glycosylation is present at Asn20. A helical membrane pass occupies residues 44–64 (GVFLMLYLITLSGNMTLVILI). Residues 65–71 (RTDSHLH) lie on the Cytoplasmic side of the membrane. The chain crosses the membrane as a helical span at residues 72–92 (TPMYFFIGNLSFLDFWYTSVY). Topologically, residues 93–113 (TPKILASCVSEDKRISLAGCG) are extracellular. Cysteines 112 and 194 form a disulfide. Residues 114 to 134 (AQLFFSCVVAYTECYLLAAMA) form a helical membrane-spanning segment. The Cytoplasmic portion of the chain corresponds to 135 to 152 (YDRHAAICNPLLYSGTMS). A helical transmembrane segment spans residues 153-173 (TALCTGLVAGSYIGGFLNAIA). The Extracellular segment spans residues 174-212 (HTANTFRLHFCGKNIIDHFFCDAPPLVKMSCTNTRVYEK). Residues 213–233 (VLLGVVGFTVLSSILAILISY) traverse the membrane as a helical segment. The Cytoplasmic portion of the chain corresponds to 234-252 (VNILLAILRIHSASGRHKA). Residues 253–273 (FSTCASHLISVMLFYGSLLFM) form a helical membrane-spanning segment. The Extracellular portion of the chain corresponds to 274–286 (YSRPSSTYSLERD). A helical membrane pass occupies residues 287–307 (KVAALFYTVINPLLNPLIYSL). The Cytoplasmic segment spans residues 308–327 (RNKDIKEAFRKATQTIQPQT).

The protein belongs to the G-protein coupled receptor 1 family.

It localises to the cell membrane. Functionally, odorant receptor. This chain is Olfactory receptor 9G4 (OR9G4), found in Homo sapiens (Human).